The following is a 227-amino-acid chain: Ornithine decarboxylase antizyme 1 (227 aa).

It belongs to the ODC antizyme family. Interacts with ODC1 and thereby sterically blocks ODC homodimerization. Forms a ternary complex with PSMB4 and OAZ1 before PSMB4 is incorporated into the 20S proteasome. Interacts with AZIN2; this interaction disrupts the interaction between the antizyme and ODC1. Interacts with FAM171A1.

Functionally, ornithine decarboxylase (ODC) antizyme protein that negatively regulates ODC activity and intracellular polyamine biosynthesis and uptake in response to increased intracellular polyamine levels. Binds to ODC monomers, inhibiting the assembly of the functional ODC homodimer, and targets the monomers for ubiquitin-independent proteolytic destruction by the 26S proteasome. Triggers ODC degradation by inducing the exposure of a cryptic proteasome-interacting surface of ODC. Stabilizes AZIN2 by interfering with its ubiquitination. Also inhibits cellular uptake of polyamines by inactivating the polyamine uptake transporter. SMAD1/OAZ1/PSMB4 complex mediates the degradation of the CREBBP/EP300 repressor SNIP1. Involved in the translocation of AZIN2 from ER-Golgi intermediate compartment (ERGIC) to the cytosol. This is Ornithine decarboxylase antizyme 1 (Oaz1) from Mus musculus (Mouse).